The following is a 193-amino-acid chain: MTEYLLLLVSTVLINNFVLVKFLGLCPFMGVSGKLETAVGMGLATTFVMTLASASSYLMEHYILIPLNIAYLRTLAFILVIAVVVQFTEMVIRKSSPTLYRLLGIFLPLITTNCAVLGVALLSINERHNFIQSIIYGFGAAAGFSLVLILFAAMRERLVAADVPTPFRGVSIAMVTAGLMSLAFMGFTGLIKI.

The next 6 helical transmembrane spans lie at L5–L25, V39–M59, I63–V83, L102–L122, I134–M154, and S171–I191.

This sequence belongs to the NqrDE/RnfAE family. As to quaternary structure, the complex is composed of six subunits: RnfA, RnfB, RnfC, RnfD, RnfE and RnfG.

The protein resides in the cell inner membrane. In terms of biological role, part of a membrane-bound complex that couples electron transfer with translocation of ions across the membrane. In Aeromonas salmonicida (strain A449), this protein is Ion-translocating oxidoreductase complex subunit A.